Reading from the N-terminus, the 683-residue chain is Boron transporter 4 (683 aa).

Over 1 to 38 (MEEERVDSSKRLFRGIVADLRGRALCYKEDWVAGLRSG) the chain is Cytoplasmic. The chain crosses the membrane as a helical span at residues 39 to 59 (FGILAPTTYIFFASALPVIAF). Residues 60–80 (GEQLSRDTEGALSTVETLAST) are Extracellular-facing. Residues 81-101 (ALCGVIHSILGGQPLLILGVA) traverse the membrane as a helical segment. The Cytoplasmic segment spans residues 102–126 (EPTVLMYVYLYNFAIGRPELGKQLY). Residues 127–147 (LAWAAWVCVWTALLLFVMAIL) form a helical membrane-spanning segment. Over 148 to 160 (NTADIINRFTRVA) the chain is Extracellular. Residues 161 to 181 (GELFGMLISVLFIQQAIKGMV) form a helical membrane-spanning segment. Residues 182 to 200 (SEFGMPKDEDSKLEKYKFE) lie on the Cytoplasmic side of the membrane. Residues 201–221 (WLYTNGLLGLIFTFGLLYTAL) traverse the membrane as a helical segment. The Extracellular segment spans residues 222 to 238 (KSRKARSWRYGTGWYRS). The helical transmembrane segment at 239 to 259 (FIADYGVPLMVVVWTALSFST) threads the bilayer. The Cytoplasmic segment spans residues 260–294 (PSKLPSGVPRRLFSPLPWDSPSLSHWTVIKDMGKV). The helical transmembrane segment at 295–315 (SPGYIFAAFIPALMIAGLYFF) threads the bilayer. The Extracellular segment spans residues 316–335 (DHSVASQLAQQKEFNLKKPS). The chain crosses the membrane as a helical span at residues 336 to 356 (AYHYDILLLGFMTLICGLLGL). At 357-477 (PPSNGVLPQS…EQRVSNLLQS (121 aa)) the chain is on the cytoplasmic side. Residues 478–498 (LLVAGAVLAMPAIKLIPTSIL) form a helical membrane-spanning segment. The Extracellular portion of the chain corresponds to 499 to 565 (WGYFAYMAID…QIFYFGLCYG (67 aa)). Residues 566-586 (VTWIPVAGIMFPVPFFLLIAI) form a helical membrane-spanning segment. The Cytoplasmic portion of the chain corresponds to 587–683 (RQYILPKLFN…GDGDMSTTRE (97 aa)). Disordered regions lie at residues 617–638 (NPLE…GDAE) and 661–683 (KGNQ…TTRE).

This sequence belongs to the anion exchanger (TC 2.A.31.3) family. In terms of tissue distribution, expressed in the distal sides of epidermal cells in the elongation zone of roots.

The protein resides in the membrane. In terms of biological role, efflux-type boron transporter polarly localized in roots. Boron is essential for maintaining the integrity of plants cell walls. This Arabidopsis thaliana (Mouse-ear cress) protein is Boron transporter 4 (BOR4).